Here is a 267-residue protein sequence, read N- to C-terminus: Phosphatidylglycerol--prolipoprotein diacylglyceryl transferase (267 aa).

The next 7 membrane-spanning stretches (helical) occupy residues 17–37 (LNIR…WLLA), 56–76 (LVTY…TLFY), 91–111 (IWNG…AIWL), 120–140 (LFEV…AGRL), 173–193 (QLYE…LFSA), 199–219 (MAVS…VEFF), and 236–256 (MGQI…GFAM). Residue arginine 139 coordinates a 1,2-diacyl-sn-glycero-3-phospho-(1'-sn-glycerol).

The protein belongs to the Lgt family.

It localises to the cell inner membrane. The enzyme catalyses L-cysteinyl-[prolipoprotein] + a 1,2-diacyl-sn-glycero-3-phospho-(1'-sn-glycerol) = an S-1,2-diacyl-sn-glyceryl-L-cysteinyl-[prolipoprotein] + sn-glycerol 1-phosphate + H(+). Its pathway is protein modification; lipoprotein biosynthesis (diacylglyceryl transfer). Functionally, catalyzes the transfer of the diacylglyceryl group from phosphatidylglycerol to the sulfhydryl group of the N-terminal cysteine of a prolipoprotein, the first step in the formation of mature lipoproteins. The protein is Phosphatidylglycerol--prolipoprotein diacylglyceryl transferase of Oleidesulfovibrio alaskensis (strain ATCC BAA-1058 / DSM 17464 / G20) (Desulfovibrio alaskensis).